Reading from the N-terminus, the 353-residue chain is Stearoyl-CoA desaturase 4 (353 aa).

Positions 1–42 (MTAHLPQEISSRCSTTNIMEPHSRRQQDGEEKMPLQAEDIRP) are disordered. Residues 1–66 (MTAHLPQEIS…EGPPPKLEYV (66 aa)) lie on the Cytoplasmic side of the membrane. Residues 8–18 (EISSRCSTTNI) show a composition bias toward polar residues. The span at 21-42 (PHSRRQQDGEEKMPLQAEDIRP) shows a compositional bias: basic and acidic residues. The helical transmembrane segment at 67 to 87 (WRNIIFMALLHVGALYGITLV) threads the bilayer. N69 is a binding site for substrate. Residues 88–91 (PSCK) are Lumenal-facing. The helical transmembrane segment at 92–112 (VYTWLLGVFYNVVAGLGITAG) threads the bilayer. Residues 113–211 (AHRLWSHRTY…EKLVMFQRRY (99 aa)) lie on the Cytoplasmic side of the membrane. Fe cation is bound by residues H114 and H119. The Histidine box-1 signature appears at 114 to 119 (HRLWSH). Substrate-binding residues include N142, R149, and D150. Fe cation is bound by residues H151, H154, and H155. The short motif at 151–155 (HRAHH) is the Histidine box-2 element. 2 residues coordinate substrate: R182 and K183. The helical transmembrane segment at 212–231 (YKLAVTLMFIILPTLVPWYL) threads the bilayer. Residues 232–235 (WGET) are Lumenal-facing. A helical transmembrane segment spans residues 236–257 (FQHSLCVSNFLRYAVLLNFTWL). W256 lines the substrate pocket. Residues 258–353 (VNSAAHLYGY…RTGDGSHKSS (96 aa)) are Cytoplasmic-facing. Residues H263, H292, H295, and H296 each coordinate Fe cation. A Histidine box-3 motif is present at residues 292 to 296 (HNYHH).

This sequence belongs to the fatty acid desaturase type 1 family. Fe(2+) is required as a cofactor. Detected in heart, but not in brain, liver, skin or adipose tissue.

The protein localises to the endoplasmic reticulum membrane. Its subcellular location is the microsome membrane. It carries out the reaction octadecanoyl-CoA + 2 Fe(II)-[cytochrome b5] + O2 + 2 H(+) = (9Z)-octadecenoyl-CoA + 2 Fe(III)-[cytochrome b5] + 2 H2O. The catalysed reaction is hexadecanoyl-CoA + 2 Fe(II)-[cytochrome b5] + O2 + 2 H(+) = (9Z)-hexadecenoyl-CoA + 2 Fe(III)-[cytochrome b5] + 2 H2O. In terms of biological role, stearoyl-CoA desaturase that utilizes O(2) and electrons from reduced cytochrome b5 to introduce the first double bond into saturated fatty acyl-CoA substrates. Catalyzes the insertion of a cis double bond at the delta-9 position into fatty acyl-CoA substrates including palmitoyl-CoA and stearoyl-CoA. Required for the biosynthesis of membrane phospholipids, cholesterol esters and triglycerides. This Mus musculus (Mouse) protein is Stearoyl-CoA desaturase 4.